Reading from the N-terminus, the 625-residue chain is Chaperone protein HtpG (625 aa).

Positions 1–341 (MGKRKFKAES…SEDLSLNISR (341 aa)) are a; substrate-binding. The tract at residues 342 to 551 (EMLQHDRQLK…DGEISLEMEK (210 aa)) is b. The interval 552-625 (IINAMPDDQQ…FTNDICKVMV (74 aa)) is c.

It belongs to the heat shock protein 90 family. Homodimer.

It localises to the cytoplasm. Molecular chaperone. Has ATPase activity. This is Chaperone protein HtpG from Oceanobacillus iheyensis (strain DSM 14371 / CIP 107618 / JCM 11309 / KCTC 3954 / HTE831).